The primary structure comprises 398 residues: Acetate kinase (398 aa).

Asn-8 contributes to the Mg(2+) binding site. Residue Lys-15 coordinates ATP. Substrate is bound at residue Arg-89. The active-site Proton donor/acceptor is Asp-146. ATP is bound by residues His-206–Gly-210, Asp-283–Arg-285, and Gly-331–Asn-335. Residue Glu-383 coordinates Mg(2+).

The protein belongs to the acetokinase family. As to quaternary structure, homodimer. The cofactor is Mg(2+). Requires Mn(2+) as cofactor.

It localises to the cytoplasm. It catalyses the reaction acetate + ATP = acetyl phosphate + ADP. Its pathway is metabolic intermediate biosynthesis; acetyl-CoA biosynthesis; acetyl-CoA from acetate: step 1/2. Its function is as follows. Catalyzes the formation of acetyl phosphate from acetate and ATP. Can also catalyze the reverse reaction. This is Acetate kinase from Streptococcus pyogenes serotype M2 (strain MGAS10270).